A 179-amino-acid chain; its full sequence is Fas apoptotic inhibitory molecule 1 (179 aa).

Position 2 is an N-acetylthreonine (threonine 2).

Belongs to the FAIM1 family. Widely expressed, with the highest levels in brain, thymus, kidney, and spleen.

It is found in the cytoplasm. In terms of biological role, plays a role as an inducible effector molecule that mediates Fas resistance produced by surface Ig engagement in B cells. The chain is Fas apoptotic inhibitory molecule 1 (Faim) from Mus musculus (Mouse).